The sequence spans 286 residues: 4-hydroxy-tetrahydrodipicolinate synthase (286 aa).

Residue threonine 42 coordinates pyruvate. The Proton donor/acceptor role is filled by tyrosine 129. Catalysis depends on lysine 157, which acts as the Schiff-base intermediate with substrate. A pyruvate-binding site is contributed by valine 196.

Belongs to the DapA family. Homotetramer; dimer of dimers.

It is found in the cytoplasm. The enzyme catalyses L-aspartate 4-semialdehyde + pyruvate = (2S,4S)-4-hydroxy-2,3,4,5-tetrahydrodipicolinate + H2O + H(+). It functions in the pathway amino-acid biosynthesis; L-lysine biosynthesis via DAP pathway; (S)-tetrahydrodipicolinate from L-aspartate: step 3/4. Its function is as follows. Catalyzes the condensation of (S)-aspartate-beta-semialdehyde [(S)-ASA] and pyruvate to 4-hydroxy-tetrahydrodipicolinate (HTPA). The protein is 4-hydroxy-tetrahydrodipicolinate synthase of Chlamydia muridarum (strain MoPn / Nigg).